Here is a 433-residue protein sequence, read N- to C-terminus: Protein CLP1 homolog (433 aa).

ATP contacts are provided by residues Glu-22, Arg-61, and 128–133 (DVGKTT).

This sequence belongs to the Clp1 family. Clp1 subfamily.

It localises to the nucleus. In terms of biological role, required for endonucleolytic cleavage during polyadenylation-dependent pre-mRNA 3'-end formation. This Brugia malayi (Filarial nematode worm) protein is Protein CLP1 homolog.